A 587-amino-acid polypeptide reads, in one-letter code: Arginine--tRNA ligase (587 aa).

The short motif at Pro127–His137 is the 'HIGH' region element.

Belongs to the class-I aminoacyl-tRNA synthetase family. Monomer.

It is found in the cytoplasm. It carries out the reaction tRNA(Arg) + L-arginine + ATP = L-arginyl-tRNA(Arg) + AMP + diphosphate. The sequence is that of Arginine--tRNA ligase from Pseudomonas paraeruginosa (strain DSM 24068 / PA7) (Pseudomonas aeruginosa (strain PA7)).